The primary structure comprises 575 residues: V-type ATP synthase alpha chain (575 aa).

238–245 (GPFGAGKT) provides a ligand contact to ATP.

It belongs to the ATPase alpha/beta chains family.

The enzyme catalyses ATP + H2O + 4 H(+)(in) = ADP + phosphate + 5 H(+)(out). In terms of biological role, produces ATP from ADP in the presence of a proton gradient across the membrane. The V-type alpha chain is a catalytic subunit. In Borrelia garinii subsp. bavariensis (strain ATCC BAA-2496 / DSM 23469 / PBi) (Borreliella bavariensis), this protein is V-type ATP synthase alpha chain.